The following is a 721-amino-acid chain: MKPPASAIDALLDGTHADPFSLLGIHEGPDGAFARAVLPGAEEAVAWSLSGKKLGKLSRVDGRGLFEGKVKGPRQPVRYACKADGHEWLVTDPYSFGPVLGPLDDFLIAEGTHLRLFDKMGAHLIEHEGARGVHFAVWAPNARLVSVVGDFNDWDHRRHPMRRRADIGVWEIFIPDIGEHRAYKYRIVGHDGGVLPLKADPYALAAEFRPSTASLTAHPVKMDWADAAHRAHWASVDARREPMSIYEVHPGSWQKPHEEGFHTWDELADRLIPYVAEMGFTHIEFLPVSEHPYDPSWGYQTTGLYAPSARFGPPEGFARFVDGAHRAGISVLIDWVPAHFPTDEHGLVRFDGTALYEHEDPRLGFHPDWNTLIYNFGRREVVSFLVNNALFWAERYHVDGLRVDAVASMLYRDYSRKAGEWIPNAEGGRENWEAVEFLKAMNRAVYGSHAGFLTIAEESTAWPGVSKPAFDGAPRENLGFGFKWNMGFMHDTLKYMAREPIHRRYHHDEITFGLMYAFSENFVLPLSHDEVVHGKGSLLNKMSGDDWQKFANLRAYYGLMWGYPGKKLLFMGQEFAQRREWSEARALDWDLLQAPAHEGIRRWVRDLNRVYASRPALHARDCEPEGFEWLVVDDAEASIFAWLRKAPGARPVAVICNMTPQVHDHYRLPLPLDGEWREVLNSDAEDYGGSGIGNLGKVTAEQGAAFVVLPPLATLMLEFEG.

D404 acts as the Nucleophile in catalysis. The Proton donor role is filled by E457.

Belongs to the glycosyl hydrolase 13 family. GlgB subfamily. Monomer.

It carries out the reaction Transfers a segment of a (1-&gt;4)-alpha-D-glucan chain to a primary hydroxy group in a similar glucan chain.. It functions in the pathway glycan biosynthesis; glycogen biosynthesis. In terms of biological role, catalyzes the formation of the alpha-1,6-glucosidic linkages in glycogen by scission of a 1,4-alpha-linked oligosaccharide from growing alpha-1,4-glucan chains and the subsequent attachment of the oligosaccharide to the alpha-1,6 position. This Novosphingobium aromaticivorans (strain ATCC 700278 / DSM 12444 / CCUG 56034 / CIP 105152 / NBRC 16084 / F199) protein is 1,4-alpha-glucan branching enzyme GlgB.